Reading from the N-terminus, the 304-residue chain is DCN1-like protein 3 (304 aa).

2 disordered regions span residues 1–87 (MGQC…EESS) and 284–304 (EGEG…EEQT). Glycine 2 carries the N-myristoyl glycine lipid modification. The 193-residue stretch at 86–278 (SSLQRLEELF…LFDTFVEWEM (193 aa)) folds into the DCUN1 domain.

As to quaternary structure, part of a complex containing DCUN1D3, CUL3 and RBX1. Interacts (via the DCUN1 domain) with the unneddylated cullins: interacts with CUL1, CUL2, CUL3, CUL4A, CUL4B and CUL5; these interactions promote the cullin neddylation and the identity of the cullin dictates the affinity of the interaction. Interacts preferentially with CUL3; this interaction triggers the relocalization of CUL3 to the cell membrane where CUL3 is neddylated. Interacts (via DCUN1 domain) with RBX1. May also interact with regulators or subunits of cullin-RING ligases such as RNF7, ELOB and DDB1; these interactions are bridged by cullins. Interacts (via DCUN1 domain) with CAND1; this interaction is bridged by cullins and strongly inhibits cullin neddylation. These CAND-cullin-DCNL complexes can only be neddylated in the presence of a substrate adapter. Interacts (via DCUN1 domain) with the N-terminally acetylated form of UBE2M and UBE2F.

The protein localises to the cell membrane. Its subcellular location is the cytoplasm. It localises to the nucleus. It is found in the perinuclear region. In terms of biological role, contributes to the neddylation of all cullins by transferring NEDD8 from N-terminally acetylated NEDD8-conjugating E2s enzyme to different cullin C-terminal domain-RBX complexes and may play a role in the cell cycle progression by regulating the SCF ubiquitin E3 ligase complex, after UV damage. At the cell membrane, can promote and as well inhibit cullins neddylation. The polypeptide is DCN1-like protein 3 (Bos taurus (Bovine)).